A 284-amino-acid chain; its full sequence is D-tagatose-1,6-bisphosphate aldolase subunit GatY (284 aa).

Aspartate 82 acts as the Proton donor in catalysis. Zn(2+)-binding residues include histidine 83 and histidine 180. Glycine 181 is a binding site for dihydroxyacetone phosphate. Histidine 208 contacts Zn(2+). Residues 209–211 and 230–233 contribute to the dihydroxyacetone phosphate site; these read GAS and NVAT.

It belongs to the class II fructose-bisphosphate aldolase family. TagBP aldolase GatY subfamily. As to quaternary structure, forms a complex with GatZ. The cofactor is Zn(2+).

It catalyses the reaction D-tagatofuranose 1,6-bisphosphate = D-glyceraldehyde 3-phosphate + dihydroxyacetone phosphate. It participates in carbohydrate metabolism; D-tagatose 6-phosphate degradation; D-glyceraldehyde 3-phosphate and glycerone phosphate from D-tagatose 6-phosphate: step 2/2. Its function is as follows. Catalytic subunit of the tagatose-1,6-bisphosphate aldolase GatYZ, which catalyzes the reversible aldol condensation of dihydroxyacetone phosphate (DHAP or glycerone-phosphate) with glyceraldehyde 3-phosphate (G3P) to produce tagatose 1,6-bisphosphate (TBP). Requires GatZ subunit for full activity and stability. Is involved in the catabolism of galactitol. This chain is D-tagatose-1,6-bisphosphate aldolase subunit GatY, found in Shigella dysenteriae serotype 1 (strain Sd197).